The primary structure comprises 594 residues: DNA ligase 2 (594 aa).

Glutamate 250 is a binding site for ATP. Lysine 252 acts as the N6-AMP-lysine intermediate in catalysis. Residues arginine 257, arginine 273, glutamate 303, phenylalanine 343, arginine 419, and lysine 425 each contribute to the ATP site.

This sequence belongs to the ATP-dependent DNA ligase family. Requires Mg(2+) as cofactor.

It catalyses the reaction ATP + (deoxyribonucleotide)n-3'-hydroxyl + 5'-phospho-(deoxyribonucleotide)m = (deoxyribonucleotide)n+m + AMP + diphosphate.. Functionally, DNA ligase that seals nicks in double-stranded DNA during DNA replication, DNA recombination and DNA repair. This chain is DNA ligase 2, found in Korarchaeum cryptofilum (strain OPF8).